Consider the following 82-residue polypeptide: Progonadoliberin-3 (82 aa).

Residues 1-23 form the signal peptide; that stretch reads MDLSNRTVVQVVVLALVAQVTLS. The residue at position 24 (Gln-24) is a Pyrrolidone carboxylic acid. The residue at position 33 (Gly-33) is a Glycine amide.

This sequence belongs to the GnRH family.

It localises to the secreted. Functionally, stimulates the secretion of gonadotropins. This chain is Progonadoliberin-3 (gnrh3), found in Salmo trutta (Brown trout).